Consider the following 192-residue polypeptide: Orotate phosphoribosyltransferase (192 aa).

116-124 (EDIVTTGLS) serves as a coordination point for 5-phospho-alpha-D-ribose 1-diphosphate. Residues Thr120 and Arg148 each coordinate orotate.

It belongs to the purine/pyrimidine phosphoribosyltransferase family. PyrE subfamily. As to quaternary structure, homodimer. Mg(2+) serves as cofactor.

The catalysed reaction is orotidine 5'-phosphate + diphosphate = orotate + 5-phospho-alpha-D-ribose 1-diphosphate. The protein operates within pyrimidine metabolism; UMP biosynthesis via de novo pathway; UMP from orotate: step 1/2. Its function is as follows. Catalyzes the transfer of a ribosyl phosphate group from 5-phosphoribose 1-diphosphate to orotate, leading to the formation of orotidine monophosphate (OMP). The polypeptide is Orotate phosphoribosyltransferase (Bartonella bacilliformis (strain ATCC 35685 / KC583 / Herrer 020/F12,63)).